A 289-amino-acid chain; its full sequence is Putative transmembrane protein ORF289 (289 aa).

Residues 1-152 (MAIAKEFLLT…QYTSVVTFRT (152 aa)) are Extracellular-facing. A helical membrane pass occupies residues 153–173 (LVAPILYFFALFLVPAWSTVL). Residues 174-234 (KQNPTFPQSQ…NGEVTSTQVN (61 aa)) lie on the Cytoplasmic side of the membrane. A helical transmembrane segment spans residues 235–255 (APIFIGVTTPSGVLVLAYNYY). Topologically, residues 256–289 (SGTISKYVSLTVTTTYGSATVINQFETKTTGGTT) are extracellular.

It localises to the host membrane. The chain is Putative transmembrane protein ORF289 from Acidianus sp. F28 (AFV-2).